Here is a 550-residue protein sequence, read N- to C-terminus: Arginine--tRNA ligase (550 aa).

The short motif at 130 to 140 (ANPTGPIHIGG) is the 'HIGH' region element.

Belongs to the class-I aminoacyl-tRNA synthetase family. As to quaternary structure, monomer.

It localises to the cytoplasm. It carries out the reaction tRNA(Arg) + L-arginine + ATP = L-arginyl-tRNA(Arg) + AMP + diphosphate. This is Arginine--tRNA ligase from Mycobacterium sp. (strain KMS).